We begin with the raw amino-acid sequence, 269 residues long: Expansin-B11 (269 aa).

Positions 1–30 (MTVVSIMWSLVQVQVLVAVALAFLVGGAWC) are cleaved as a signal peptide. Asn-40 carries an N-linked (GlcNAc...) asparagine glycan. The region spanning 69 to 175 (GGGCGYKDVN…RRVKCKYGSK (107 aa)) is the Expansin-like EG45 domain. Disulfide bonds link Cys-72-Cys-100, Cys-103-Cys-170, and Cys-108-Cys-114. Positions 187 to 268 (NYLALLVKYV…GWKPNTAYTA (82 aa)) constitute an Expansin-like CBD domain.

Belongs to the expansin family. Expansin B subfamily. As to expression, expressed in pollen.

The protein resides in the secreted. Its subcellular location is the cell wall. It localises to the membrane. In terms of biological role, may aid fertilization by loosening the cell wall of the stigma and style, thereby facilitating penetration of the pollen tube. Acts selectively on grass cell walls, which are relatively poor in pectins and xyloglucans and rich in glucuronoarabinoxylans and (1-3),(1-4)-beta-D-glucans, when compared with cell walls of other angiosperms, including other monocots. In Zea mays (Maize), this protein is Expansin-B11 (EXPB11).